A 227-amino-acid chain; its full sequence is tRNA (guanine-N(1)-)-methyltransferase (227 aa).

S-adenosyl-L-methionine is bound by residues Gly-107 and 127 to 132; that span reads LGDFIL.

This sequence belongs to the RNA methyltransferase TrmD family. As to quaternary structure, homodimer.

The protein resides in the cytoplasm. The enzyme catalyses guanosine(37) in tRNA + S-adenosyl-L-methionine = N(1)-methylguanosine(37) in tRNA + S-adenosyl-L-homocysteine + H(+). Specifically methylates guanosine-37 in various tRNAs. The polypeptide is tRNA (guanine-N(1)-)-methyltransferase (Mesomycoplasma hyopneumoniae (strain 232) (Mycoplasma hyopneumoniae)).